Here is a 503-residue protein sequence, read N- to C-terminus: 5'-3' exonuclease PLD4 (503 aa).

The Cytoplasmic portion of the chain corresponds to 1–36; the sequence is MDKKKEHPEMRIPLQTAVEVSDWPCSTSHDPHSGLG. Residues 37–57 form a signal-anchor for type II membrane protein membrane-spanning segment; that stretch reads MVLGMLAVLGLSSVTLILFLW. The Lumenal segment spans residues 58–503; the sequence is QGATSFTSHR…RQVPSQDCVW (446 aa). 3 N-linked (GlcNAc...) asparagine glycosylation sites follow: Asn-89, Asn-148, and Asn-169. Cys-92 and Cys-248 are disulfide-bonded. The region spanning 207 to 234 is the PLD phosphodiesterase 1 domain; the sequence is TGGVLHSKFWVVDGRHIYVGSANMDWRS. Residues His-212, Lys-214, and Asp-219 contribute to the active site. Residue His-212 is the Proton donor of the active site. Residues Asn-247, Asn-279, Asn-415, and Asn-425 are each glycosylated (N-linked (GlcNAc...) asparagine). Cys-377 and Cys-501 form a disulfide bridge. One can recognise a PLD phosphodiesterase 2 domain in the interval 421 to 447; sequence FSRVNHSKFMVTDKTAYVGTSNWSEDY. Catalysis depends on residues His-426, Lys-428, and Asp-433. Residue His-426 is the Nucleophile of the active site. A glycan (N-linked (GlcNAc...) asparagine) is linked at Asn-442.

This sequence belongs to the phospholipase D family. In terms of processing, highly N-glycosylated. Enriched in the white matter of early postnatal brains, as well as in splenic marginal zone cells. Highly expressed in dendritic cells (DCs) and other myeloid cells, with lower expression in B cell.

The protein resides in the endoplasmic reticulum membrane. The protein localises to the golgi apparatus. It localises to the trans-Golgi network membrane. It is found in the nucleus. Its subcellular location is the early endosome. The protein resides in the cytoplasmic vesicle. The protein localises to the phagosome. It localises to the lysosome. The enzyme catalyses Exonucleolytic cleavage in the 5'- to 3'-direction to yield nucleoside 3'-phosphates.. The catalysed reaction is a 5'-end 5'-dephospho-ribonucleotidyl-ribonucleotide-RNA + H2O = a ribonucleoside 3'-phosphate + a 5'-end dephospho-ribonucleoside-RNA + H(+). It carries out the reaction a ribonucleoside 3'-phosphate-2'-3'-cyclophospho-GMP + H2O = a ribonucleoside 3'-phosphate + 2',3'-cyclophospho-GMP + H(+). It catalyses the reaction a 5'-end 5'-dephospho-2'-deoxyribonucleotidyl-2'-deoxyribonucleotide in single-stranded DNA + H2O = a 5'-end dephospho-2'-deoxyribonucleoside in single-stranded DNA + a 2'-deoxyribonucleoside 3'-phosphate + H(+). The enzyme catalyses a 5'-end 5'-phospho-2'-deoxyribonucleotide in single-stranded DNA + H2O = a 5'-end 5'-dephospho-2'-deoxyribonucleotide in single-stranded DNA + phosphate. The catalysed reaction is a 3-lyso-sn-glycero-1-phospho-(3'-acyl-1'-sn-glycerol) + a 1-acyl-sn-glycerol = a 3-acyl-sn-glycero-1-phospho-(3'-acyl-1'-sn-glycerol) + glycerol. It carries out the reaction 3-lyso-sn-glycero-1-phospho-(3'-(9Z-octadecenoyl)-1'-sn-glycerol) + 1-(9Z-octadecenoyl)-sn-glycerol = 3-(9Z-octadecenoyl)-sn-glycero-1-phospho-(3'-(9Z-octadecenoyl)-1'-sn-glycerol) + glycerol. Its activity is regulated as follows. The exonuclease activity toward ssDNA substrate is Ca(2+) and Mg(2+)-independent, but it is inhibited by Fe(2+), Cu(2+) and to a lesser extent Zn(2+) ions. In terms of biological role, 5'-&gt;3' exonuclease that hydrolyzes the phosphodiester bond of single-stranded DNA (ssDNA) and RNA molecules to form nucleoside 3'-monophosphates and 5'-end 5'-hydroxy deoxyribonucleotide/ribonucleotide fragments. Partially redundant with PLD4, can cleave all four nucleotides displaying higher efficiency for ssDNA and RNA fragments initiated with uridine and guanosine residues and lower efficiency for cytidine-initiated substrates. As a result, it does not always degrade polynucleotides to the single nucleotide level, it can stall at specific sites sparing certain fragments from exonucleolytic degradation. Processes self and pathogenic ssDNA and RNA molecules that reach the endolysosomal compartment via phagocytosis or autophagy and may serve as 'danger' signals for recognition by innate immune receptors such as toll-like receptors (TLRs). Degrades mitochondrial CpG-rich ssDNA fragments to prevent TLR9 activation and autoinflammatory response, but it can cleave viral RNA to generate ligands for TLR7 activation and initiate antiviral immune responses. In plasmacytoid dendritic cells, it cooperates with endonuclease RNASET2 to release 2',3'-cyclic guanosine monophosphate (2',3'-cGMP), a potent stimulatory ligand for TLR7. Produces 2',3'-cGMPs and cytidine-rich RNA fragments that occupy TLR7 ligand-binding pockets and trigger a signaling-competent state. Can exert polynucleotide phosphatase activity toward 5'-phosphorylated ssDNA substrates although at a slow rate. Transphosphatidylase that catalyzes the exchange with R to S stereo-inversion of the glycerol moiety between (S,R)-lysophosphatidylglycerol (LPG) and monoacylglycerol (MAG) substrates to yield (S,S)-bis(monoacylglycero)phosphate (BMP). Can synthesize a variety of (S,S)-BMPs representing the main phospholipid constituent of lysosomal intralumenal vesicle (ILV) membranes that bind acid hydrolases for lipid degradation. Regulates the homeostasis and interorganellar communication of the endolysosomal system with an overall impact on cellular removal of dysfunctional organelles via autophagy as well as proper protein and lipid turnover. May play a role in myotube formation in response to ER stress. The protein is 5'-3' exonuclease PLD4 of Mus musculus (Mouse).